Reading from the N-terminus, the 239-residue chain is Uridylate kinase (239 aa).

10–13 (KLSG) lines the ATP pocket. Glycine 52 is a binding site for UMP. The ATP site is built by glycine 53 and arginine 57. Residues aspartate 72 and 133-140 (TGNPFFTT) contribute to the UMP site. Residues threonine 160, tyrosine 166, and aspartate 169 each coordinate ATP.

It belongs to the UMP kinase family. As to quaternary structure, homohexamer.

The protein resides in the cytoplasm. It carries out the reaction UMP + ATP = UDP + ADP. Its pathway is pyrimidine metabolism; CTP biosynthesis via de novo pathway; UDP from UMP (UMPK route): step 1/1. With respect to regulation, inhibited by UTP. Catalyzes the reversible phosphorylation of UMP to UDP. The chain is Uridylate kinase from Porphyromonas gingivalis (strain ATCC BAA-308 / W83).